A 421-amino-acid chain; its full sequence is UDP-N-acetylglucosamine 1-carboxyvinyltransferase (421 aa).

22–23 (KN) lines the phosphoenolpyruvate pocket. Arginine 94 is a binding site for UDP-N-acetyl-alpha-D-glucosamine. Residue cysteine 118 is the Proton donor of the active site. Residue cysteine 118 is modified to 2-(S-cysteinyl)pyruvic acid O-phosphothioketal. UDP-N-acetyl-alpha-D-glucosamine is bound by residues 163 to 166 (KVSV), aspartate 308, and isoleucine 330.

This sequence belongs to the EPSP synthase family. MurA subfamily.

It is found in the cytoplasm. It carries out the reaction phosphoenolpyruvate + UDP-N-acetyl-alpha-D-glucosamine = UDP-N-acetyl-3-O-(1-carboxyvinyl)-alpha-D-glucosamine + phosphate. It participates in cell wall biogenesis; peptidoglycan biosynthesis. In terms of biological role, cell wall formation. Adds enolpyruvyl to UDP-N-acetylglucosamine. This chain is UDP-N-acetylglucosamine 1-carboxyvinyltransferase, found in Orientia tsutsugamushi (strain Ikeda) (Rickettsia tsutsugamushi).